The chain runs to 431 residues: Bifunctional protein GlmU (431 aa).

The interval 1–223 is pyrophosphorylase; it reads MNLSIVILAA…EENFKGVNSK (223 aa). Residues 8–11, Lys-22, Gln-74, and 81–82 contribute to the UDP-N-acetyl-alpha-D-glucosamine site; these read LAAG and GT. Mg(2+) is bound at residue Asp-102. Residues Gly-135, Glu-149, Asn-164, and Asn-221 each contribute to the UDP-N-acetyl-alpha-D-glucosamine site. Asn-221 serves as a coordination point for Mg(2+). The segment at 224–244 is linker; the sequence is ADLAEAEAIMTGRIRRRWMRE. Positions 245–431 are N-acetyltransferase; the sequence is GVRMRLPETI…FFARYFSSSK (187 aa). Arg-308 and Lys-325 together coordinate UDP-N-acetyl-alpha-D-glucosamine. The Proton acceptor role is filled by His-336. 2 residues coordinate UDP-N-acetyl-alpha-D-glucosamine: Tyr-339 and Asn-350. Acetyl-CoA-binding positions include Ala-353, 359–360, Ser-378, Ala-396, and Arg-413; that span reads NY.

This sequence in the N-terminal section; belongs to the N-acetylglucosamine-1-phosphate uridyltransferase family. The protein in the C-terminal section; belongs to the transferase hexapeptide repeat family. As to quaternary structure, homotrimer. Requires Mg(2+) as cofactor.

The protein resides in the cytoplasm. It catalyses the reaction alpha-D-glucosamine 1-phosphate + acetyl-CoA = N-acetyl-alpha-D-glucosamine 1-phosphate + CoA + H(+). The catalysed reaction is N-acetyl-alpha-D-glucosamine 1-phosphate + UTP + H(+) = UDP-N-acetyl-alpha-D-glucosamine + diphosphate. Its pathway is nucleotide-sugar biosynthesis; UDP-N-acetyl-alpha-D-glucosamine biosynthesis; N-acetyl-alpha-D-glucosamine 1-phosphate from alpha-D-glucosamine 6-phosphate (route II): step 2/2. It participates in nucleotide-sugar biosynthesis; UDP-N-acetyl-alpha-D-glucosamine biosynthesis; UDP-N-acetyl-alpha-D-glucosamine from N-acetyl-alpha-D-glucosamine 1-phosphate: step 1/1. The protein operates within bacterial outer membrane biogenesis; LPS lipid A biosynthesis. Functionally, catalyzes the last two sequential reactions in the de novo biosynthetic pathway for UDP-N-acetylglucosamine (UDP-GlcNAc). The C-terminal domain catalyzes the transfer of acetyl group from acetyl coenzyme A to glucosamine-1-phosphate (GlcN-1-P) to produce N-acetylglucosamine-1-phosphate (GlcNAc-1-P), which is converted into UDP-GlcNAc by the transfer of uridine 5-monophosphate (from uridine 5-triphosphate), a reaction catalyzed by the N-terminal domain. This chain is Bifunctional protein GlmU, found in Wolinella succinogenes (strain ATCC 29543 / DSM 1740 / CCUG 13145 / JCM 31913 / LMG 7466 / NCTC 11488 / FDC 602W) (Vibrio succinogenes).